Consider the following 223-residue polypeptide: Urease accessory protein UreF (223 aa).

This sequence belongs to the UreF family. As to quaternary structure, ureD, UreF and UreG form a complex that acts as a GTP-hydrolysis-dependent molecular chaperone, activating the urease apoprotein by helping to assemble the nickel containing metallocenter of UreC. The UreE protein probably delivers the nickel.

The protein resides in the cytoplasm. Functionally, required for maturation of urease via the functional incorporation of the urease nickel metallocenter. This Rhizobium johnstonii (strain DSM 114642 / LMG 32736 / 3841) (Rhizobium leguminosarum bv. viciae) protein is Urease accessory protein UreF.